The primary structure comprises 102 residues: Small ribosomal subunit protein uS14 (102 aa).

It belongs to the universal ribosomal protein uS14 family. Part of the 30S ribosomal subunit. Contacts proteins S3 and S10.

Binds 16S rRNA, required for the assembly of 30S particles and may also be responsible for determining the conformation of the 16S rRNA at the A site. The protein is Small ribosomal subunit protein uS14 of Ehrlichia ruminantium (strain Gardel).